A 442-amino-acid polypeptide reads, in one-letter code: Putative ammonium transporter sll1017 (442 aa).

A run of 13 helical transmembrane segments spans residues 5 to 25, 44 to 64, 81 to 101, 104 to 124, 133 to 153, 155 to 175, 193 to 213, 240 to 260, 269 to 289, 299 to 319, 325 to 345, 354 to 374, and 386 to 406; these read NFPL…VGVA, LFLL…AMLE, TFDV…LMYG, PVLG…LDNV, WLFQ…AVMG, MYFK…YPIS, FAGS…AVVV, GVFI…LAFV, MLIA…ALAF, PNLL…TAGC, WSAI…TKLL, VGAW…VGIF, and IVGS…LFYV.

It belongs to the ammonia transporter channel (TC 1.A.11.2) family.

It is found in the cell membrane. In Synechocystis sp. (strain ATCC 27184 / PCC 6803 / Kazusa), this protein is Putative ammonium transporter sll1017.